Consider the following 301-residue polypeptide: Oxygen-dependent coproporphyrinogen-III oxidase (301 aa).

Ser-90 provides a ligand contact to substrate. Positions 94 and 104 each coordinate a divalent metal cation. His-104 (proton donor) is an active-site residue. Substrate is bound at residue 106 to 108; the sequence is NVR. 2 residues coordinate a divalent metal cation: His-143 and His-173. Positions 238–273 are important for dimerization; it reads YVEFNLVWDRGTLFGLQSGGRTESILMSLPPIVKWR. 256–258 is a binding site for substrate; the sequence is GGR.

Belongs to the aerobic coproporphyrinogen-III oxidase family. In terms of assembly, homodimer. Requires a divalent metal cation as cofactor.

Its subcellular location is the cytoplasm. The enzyme catalyses coproporphyrinogen III + O2 + 2 H(+) = protoporphyrinogen IX + 2 CO2 + 2 H2O. Its pathway is porphyrin-containing compound metabolism; protoporphyrin-IX biosynthesis; protoporphyrinogen-IX from coproporphyrinogen-III (O2 route): step 1/1. Functionally, involved in the heme biosynthesis. Catalyzes the aerobic oxidative decarboxylation of propionate groups of rings A and B of coproporphyrinogen-III to yield the vinyl groups in protoporphyrinogen-IX. This Nitrosomonas eutropha (strain DSM 101675 / C91 / Nm57) protein is Oxygen-dependent coproporphyrinogen-III oxidase.